Consider the following 302-residue polypeptide: Putative S-adenosyl-L-methionine-dependent methyltransferase MMAR_1068 (302 aa).

Residues Asp127 and 156 to 157 contribute to the S-adenosyl-L-methionine site; that span reads DL.

The protein belongs to the UPF0677 family.

Functionally, exhibits S-adenosyl-L-methionine-dependent methyltransferase activity. The chain is Putative S-adenosyl-L-methionine-dependent methyltransferase MMAR_1068 from Mycobacterium marinum (strain ATCC BAA-535 / M).